The following is a 100-amino-acid chain: Omega toxin Ap2 (100 aa).

A signal peptide spans 1–22 (MNTTQVILFAVVLVLTVTVGQA). A propeptide spanning residues 23–57 (DEDSAETSLLRKLEEAEASMFGQYLEESKNSPEQR) is cleaved from the precursor. Disulfide bonds link C58/C74, C65/C79, and C73/C94. Position 99 is a serine amide (S99).

The protein belongs to the neurotoxin 14 (magi-1) family. 08 (Ltx-4) subfamily. As to expression, expressed by the venom duct.

Its subcellular location is the secreted. Inhibits 31.17% of Cav2.1/CACNA1A current at 1 uM concentration. This Acanthoscurria paulensis (Brazilian giant black tarantula spider) protein is Omega toxin Ap2.